The primary structure comprises 174 residues: Ribosomal RNA large subunit methyltransferase H (174 aa).

S-adenosyl-L-methionine contacts are provided by residues Leu90, Gly122, and 141–146 (LGELTW).

This sequence belongs to the RNA methyltransferase RlmH family. As to quaternary structure, homodimer.

The protein localises to the cytoplasm. It carries out the reaction pseudouridine(1915) in 23S rRNA + S-adenosyl-L-methionine = N(3)-methylpseudouridine(1915) in 23S rRNA + S-adenosyl-L-homocysteine + H(+). Functionally, specifically methylates the pseudouridine at position 1915 (m3Psi1915) in 23S rRNA. The chain is Ribosomal RNA large subunit methyltransferase H from Brucella melitensis biotype 2 (strain ATCC 23457).